Reading from the N-terminus, the 453-residue chain is Retroviral integration site protein Fli-1 homolog (453 aa).

The region spanning 111-197 (PPPPNMTTNE…SHLNYLRDSS (87 aa)) is the PNT domain. A compositionally biased stretch (polar residues) spans 201 to 214 (GYNTQAHTDQSSRL). The disordered stretch occupies residues 201 to 273 (GYNTQAHTDQ…YQILGPTSSR (73 aa)). Residues 215-226 (TAKEDPSYEAVR) show a composition bias toward basic and acidic residues. Polar residues-rich tracts occupy residues 230–239 (WGNSMSSPVT) and 246–273 (GTQN…TSSR). The ETS DNA-binding region spans 282–362 (IQLWQFLLEL…HGKRYAYKFD (81 aa)).

Belongs to the ETS family.

The protein localises to the nucleus. This Xenopus laevis (African clawed frog) protein is Retroviral integration site protein Fli-1 homolog (fli1).